An 838-amino-acid polypeptide reads, in one-letter code: Periplasmic nitrate reductase (838 aa).

The segment at residues 1 to 29 (MKVSRRAFIKQTAAAATASVAGVTLPAGA) is a signal peptide (tat-type signal). Positions 41 to 97 (LKWSKAPCRFCGTGCGVEVAVKDNRVVATQGDPKAEVNRGLNCVKGYFLSKIMYGKD) constitute a 4Fe-4S Mo/W bis-MGD-type domain. 4 residues coordinate [4Fe-4S] cluster: Cys48, Cys51, Cys55, and Cys83. Residues Lys85, Gln152, Asn177, Cys181, 214-221 (WGSNMAEM), 245-249 (STFTH), Met382, Gln386, Asn492, 518-519 (SD), Lys541, Asp568, and 728-737 (TGRVLEHWHS) contribute to the Mo-bis(molybdopterin guanine dinucleotide) site. Position 804 (Trp804) interacts with substrate. 2 residues coordinate Mo-bis(molybdopterin guanine dinucleotide): Asn812 and Lys829.

It belongs to the prokaryotic molybdopterin-containing oxidoreductase family. NasA/NapA/NarB subfamily. As to quaternary structure, component of the periplasmic nitrate reductase NapAB complex composed of NapA and NapB. [4Fe-4S] cluster serves as cofactor. Requires Mo-bis(molybdopterin guanine dinucleotide) as cofactor. In terms of processing, predicted to be exported by the Tat system. The position of the signal peptide cleavage has not been experimentally proven.

It is found in the periplasm. The enzyme catalyses 2 Fe(II)-[cytochrome] + nitrate + 2 H(+) = 2 Fe(III)-[cytochrome] + nitrite + H2O. Its function is as follows. Catalytic subunit of the periplasmic nitrate reductase complex NapAB. Receives electrons from NapB and catalyzes the reduction of nitrate to nitrite. The protein is Periplasmic nitrate reductase of Ralstonia pickettii (strain 12J).